The sequence spans 860 residues: DNA mismatch repair protein MutS (860 aa).

Residue 625 to 632 coordinates ATP; it reads GPNMGGKS.

This sequence belongs to the DNA mismatch repair MutS family.

Its function is as follows. This protein is involved in the repair of mismatches in DNA. It is possible that it carries out the mismatch recognition step. This protein has a weak ATPase activity. This Aeromonas hydrophila subsp. hydrophila (strain ATCC 7966 / DSM 30187 / BCRC 13018 / CCUG 14551 / JCM 1027 / KCTC 2358 / NCIMB 9240 / NCTC 8049) protein is DNA mismatch repair protein MutS.